Reading from the N-terminus, the 238-residue chain is ATP synthase subunit O, mitochondrial (238 aa).

Residues 1-36 (MANRFRSGISFFKTIAVTDSVSSVRSKSLFPALRTY) constitute a mitochondrion transit peptide. Position 90 is a phosphothreonine (threonine 90).

This sequence belongs to the ATPase delta chain family. As to quaternary structure, F-type ATPases have 2 components, CF(1) - the catalytic core - and CF(0) - the membrane proton channel. CF(1) has five subunits: alpha(3), beta(3), gamma(1), delta(1), epsilon(1). CF(0) has three main subunits: a, b and c.

Its subcellular location is the mitochondrion. It is found in the mitochondrion inner membrane. Functionally, mitochondrial membrane ATP synthase (F(1)F(0) ATP synthase or Complex V) produces ATP from ADP in the presence of a proton gradient across the membrane which is generated by electron transport complexes of the respiratory chain. F-type ATPases consist of two structural domains, F(1) - containing the extramembraneous catalytic core and F(0) - containing the membrane proton channel, linked together by a central stalk and a peripheral stalk. During catalysis, ATP synthesis in the catalytic domain of F(1) is coupled via a rotary mechanism of the central stalk subunits to proton translocation. Part of the complex F(0) domain and the peripheric stalk, which acts as a stator to hold the catalytic alpha(3)beta(3) subcomplex and subunit a/ATP6 static relative to the rotary elements. The polypeptide is ATP synthase subunit O, mitochondrial (Arabidopsis thaliana (Mouse-ear cress)).